The following is a 503-amino-acid chain: Maturase K (503 aa).

Belongs to the intron maturase 2 family. MatK subfamily.

Its subcellular location is the plastid. It is found in the chloroplast. Functionally, usually encoded in the trnK tRNA gene intron. Probably assists in splicing its own and other chloroplast group II introns. In Backhousia subargentea (Giant ironwood), this protein is Maturase K.